We begin with the raw amino-acid sequence, 504 residues long: Pentatricopeptide repeat-containing protein At1g09220, mitochondrial (504 aa).

Residues 1 to 87 (MFLFSSRRIT…FLFNPLLRCY (87 aa)) constitute a mitochondrion transit peptide. PPR repeat units follow at residues 76 to 110 (KLFL…HFLS), 120 to 156 (DSFT…GFES), 157 to 187 (HVYV…MPER), 188 to 222 (NPVT…TVVS), 223 to 253 (WTTI…DAIK), 255 to 289 (NEIT…GFVP), 291 to 321 (DIRV…IPNG), 324 to 358 (NLVS…GLKP), 359 to 390 (NRVT…MVNE), and 396 to 430 (DVKH…EKAV). A type E motif; degenerate region spans residues 431 to 504 (VWRMLLGACS…AKLPGHSQVT (74 aa)).

This sequence belongs to the PPR family. PCMP-E subfamily.

It localises to the mitochondrion. In Arabidopsis thaliana (Mouse-ear cress), this protein is Pentatricopeptide repeat-containing protein At1g09220, mitochondrial (PCMP-E25).